Reading from the N-terminus, the 743-residue chain is Phosphoribosylformylglycinamidine synthase subunit PurL (743 aa).

Residue His54 is part of the active site. The ATP site is built by Tyr57 and Lys96. Residue Glu98 participates in Mg(2+) binding. Residues 99 to 102 and Arg121 each bind substrate; that span reads SHNH. The Proton acceptor role is filled by His100. Asp122 provides a ligand contact to Mg(2+). Gln245 is a substrate binding site. Asp273 is a Mg(2+) binding site. A substrate-binding site is contributed by 317–319; sequence ESQ. Asp501 and Gly538 together coordinate ATP. Asn539 is a Mg(2+) binding site. Ser541 is a substrate binding site.

This sequence belongs to the FGAMS family. As to quaternary structure, monomer. Part of the FGAM synthase complex composed of 1 PurL, 1 PurQ and 2 PurS subunits.

The protein resides in the cytoplasm. The catalysed reaction is N(2)-formyl-N(1)-(5-phospho-beta-D-ribosyl)glycinamide + L-glutamine + ATP + H2O = 2-formamido-N(1)-(5-O-phospho-beta-D-ribosyl)acetamidine + L-glutamate + ADP + phosphate + H(+). The protein operates within purine metabolism; IMP biosynthesis via de novo pathway; 5-amino-1-(5-phospho-D-ribosyl)imidazole from N(2)-formyl-N(1)-(5-phospho-D-ribosyl)glycinamide: step 1/2. Its function is as follows. Part of the phosphoribosylformylglycinamidine synthase complex involved in the purines biosynthetic pathway. Catalyzes the ATP-dependent conversion of formylglycinamide ribonucleotide (FGAR) and glutamine to yield formylglycinamidine ribonucleotide (FGAM) and glutamate. The FGAM synthase complex is composed of three subunits. PurQ produces an ammonia molecule by converting glutamine to glutamate. PurL transfers the ammonia molecule to FGAR to form FGAM in an ATP-dependent manner. PurS interacts with PurQ and PurL and is thought to assist in the transfer of the ammonia molecule from PurQ to PurL. This is Phosphoribosylformylglycinamidine synthase subunit PurL from Halalkalibacterium halodurans (strain ATCC BAA-125 / DSM 18197 / FERM 7344 / JCM 9153 / C-125) (Bacillus halodurans).